Here is a 351-residue protein sequence, read N- to C-terminus: uncharacterized protein (351 aa).

This is an uncharacterized protein from Caenorhabditis elegans.